We begin with the raw amino-acid sequence, 101 residues long: Urease subunit beta (101 aa).

This sequence belongs to the urease beta subunit family. As to quaternary structure, heterotrimer of UreA (gamma), UreB (beta) and UreC (alpha) subunits. Three heterotrimers associate to form the active enzyme.

The protein resides in the cytoplasm. The catalysed reaction is urea + 2 H2O + H(+) = hydrogencarbonate + 2 NH4(+). Its pathway is nitrogen metabolism; urea degradation; CO(2) and NH(3) from urea (urease route): step 1/1. The polypeptide is Urease subunit beta (Agrobacterium fabrum (strain C58 / ATCC 33970) (Agrobacterium tumefaciens (strain C58))).